The sequence spans 226 residues: 3-dehydroquinate dehydratase (226 aa).

3-dehydroquinate contacts are provided by residues 33 to 35 (EWR) and R65. H121 (proton donor/acceptor) is an active-site residue. The active-site Schiff-base intermediate with substrate is the K146. 3-dehydroquinate-binding residues include R188, S207, and Q211.

Belongs to the type-I 3-dehydroquinase family. In terms of assembly, homodimer.

The enzyme catalyses 3-dehydroquinate = 3-dehydroshikimate + H2O. It functions in the pathway metabolic intermediate biosynthesis; chorismate biosynthesis; chorismate from D-erythrose 4-phosphate and phosphoenolpyruvate: step 3/7. Functionally, involved in the third step of the chorismate pathway, which leads to the biosynthesis of aromatic amino acids. Catalyzes the cis-dehydration of 3-dehydroquinate (DHQ) and introduces the first double bond of the aromatic ring to yield 3-dehydroshikimate. The chain is 3-dehydroquinate dehydratase from Lactococcus lactis subsp. lactis (strain IL1403) (Streptococcus lactis).